A 416-amino-acid polypeptide reads, in one-letter code: UDP-N-acetylglucosamine 1-carboxyvinyltransferase (416 aa).

22–23 (KN) contributes to the phosphoenolpyruvate binding site. Arg-91 contacts UDP-N-acetyl-alpha-D-glucosamine. Catalysis depends on Cys-115, which acts as the Proton donor. A 2-(S-cysteinyl)pyruvic acid O-phosphothioketal modification is found at Cys-115. UDP-N-acetyl-alpha-D-glucosamine is bound by residues 120-124 (RPIDL), Asp-305, and Ile-327.

The protein belongs to the EPSP synthase family. MurA subfamily.

The protein resides in the cytoplasm. The enzyme catalyses phosphoenolpyruvate + UDP-N-acetyl-alpha-D-glucosamine = UDP-N-acetyl-3-O-(1-carboxyvinyl)-alpha-D-glucosamine + phosphate. It functions in the pathway cell wall biogenesis; peptidoglycan biosynthesis. Cell wall formation. Adds enolpyruvyl to UDP-N-acetylglucosamine. In Buchnera aphidicola subsp. Acyrthosiphon pisum (strain Tuc7), this protein is UDP-N-acetylglucosamine 1-carboxyvinyltransferase.